The chain runs to 156 residues: MIDLPFLLAEEIEGGLFDFNGTLPLMALQFLTLMVLLNTIFYKPVTKVLDERDEYIRTTLTTASSMLVKADELAAKYEEDLSEARRNAQLKIASSQKEAQNIVSEDIKKAQLNAEKLIAEASKQLNVQKEEALKTLENQVDTLSDQIKVKLLSSQS.

Residues 20–42 (NGTLPLMALQFLTLMVLLNTIFY) form a helical membrane-spanning segment.

It belongs to the ATPase B chain family. In terms of assembly, F-type ATPases have 2 components, F(1) - the catalytic core - and F(0) - the membrane proton channel. F(1) has five subunits: alpha(3), beta(3), gamma(1), delta(1), epsilon(1). F(0) has four main subunits: a(1), b(1), b'(1) and c(10-14). The alpha and beta chains form an alternating ring which encloses part of the gamma chain. F(1) is attached to F(0) by a central stalk formed by the gamma and epsilon chains, while a peripheral stalk is formed by the delta, b and b' chains.

The protein resides in the plastid. Its subcellular location is the chloroplast thylakoid membrane. Functionally, f(1)F(0) ATP synthase produces ATP from ADP in the presence of a proton or sodium gradient. F-type ATPases consist of two structural domains, F(1) containing the extramembraneous catalytic core and F(0) containing the membrane proton channel, linked together by a central stalk and a peripheral stalk. During catalysis, ATP synthesis in the catalytic domain of F(1) is coupled via a rotary mechanism of the central stalk subunits to proton translocation. Its function is as follows. Component of the F(0) channel, it forms part of the peripheral stalk, linking F(1) to F(0). The b'-subunit is a diverged and duplicated form of b found in plants and photosynthetic bacteria. This is ATP synthase subunit b', chloroplastic from Pyropia yezoensis (Susabi-nori).